A 348-amino-acid polypeptide reads, in one-letter code: tRNA pseudouridine synthase D (348 aa).

Catalysis depends on Asp81, which acts as the Nucleophile. The 147-residue stretch at 158 to 304 (GVPNYFGAQR…MRHERRSIEL (147 aa)) folds into the TRUD domain.

It belongs to the pseudouridine synthase TruD family.

The catalysed reaction is uridine(13) in tRNA = pseudouridine(13) in tRNA. Responsible for synthesis of pseudouridine from uracil-13 in transfer RNAs. This Aliivibrio salmonicida (strain LFI1238) (Vibrio salmonicida (strain LFI1238)) protein is tRNA pseudouridine synthase D.